Consider the following 137-residue polypeptide: Proofreading thioesterase EntH (137 aa).

E63 serves as the catalytic Nucleophile or proton acceptor.

Belongs to the thioesterase PaaI family. Homotetramer. Dimer of dimers. Interacts specifically with the aryl carrier protein (ArCP) domain of EntB.

It is found in the cytoplasm. It functions in the pathway siderophore biosynthesis; enterobactin biosynthesis. Required for optimal enterobactin synthesis. Acts as a proofreading enzyme that prevents EntB misacylation by hydrolyzing the thioester bound existing between EntB and wrongly charged molecules. This chain is Proofreading thioesterase EntH (entH), found in Klebsiella pneumoniae subsp. pneumoniae (strain ATCC 700721 / MGH 78578).